We begin with the raw amino-acid sequence, 437 residues long: O-methyltransferase elcB (437 aa).

Asp-269 is a binding site for S-adenosyl-L-methionine. Residue His-319 is the Proton acceptor of the active site.

The protein belongs to the class I-like SAM-binding methyltransferase superfamily. Cation-independent O-methyltransferase family. COMT subfamily.

Its pathway is secondary metabolite biosynthesis. Functionally, O-methyltransferase; part of the gene cluster that mediates the biosynthesis of elsinochrome C, a perelyenequinone phytotoxin structurally similar to cercosporin. The first step of elsinochrome C biosynthesis is performed by the polyketide synthase elcA which catalyzes the formation of nor-toralactone. The starter unit acyltransferase (SAT) domain of elcA initiates polyketide extension by the selective utilization of acetyl-CoA, which is elongated to the heptaketide in the beta-ketoacyl synthase (KS) domain by successive condensations with six malonyl units introduced by the malonyl acyltransferase (MAT) domain. The product template (PT) domain catalyzes C4-C9 and C2-C11 aldol cyclizations and dehydrations to a trihydroxynaphthalene, which is thought to be delivered to the thioesterase (TE) domain for product release. The bifunctional enzyme elcB then methylates nor-toralactone to toralactone before conducting an unusual oxidative aromatic ring opening. The next step in perylenequinone biosynthesis is an O-methylation at the nascent OH-6 of the elcB product performed by the O-methyltransferase elcD. The oxidative coupling of the two monomeric naphthol units in perylenequinone biosynthesis is catalyzed by the FAD-dependent monooxygenase elcE and the multicopper oxidase elcG. ElcG might catalyze the first intermolecular coupling in a regio- and stereo-selective manner via a phenol radical coupling mechanism and the elcE could forge the second C-C bond intramolecularly via a hydride transfer mechanism. The fasciclin domain-containing protein elcF might also play a role duting this step. The last piece of the puzzle in the biosynthesis of elsinochrome C is the additional annulation by enolate coupling to afford the dihydrobenzo(ghi)perylenequinone system, catalyzed by the FAD-dependent monooxygenase elcH. The chain is O-methyltransferase elcB from Phaeosphaeria nodorum (strain SN15 / ATCC MYA-4574 / FGSC 10173) (Glume blotch fungus).